The following is a 112-amino-acid chain: uncharacterized protein (112 aa).

The region spanning 5–112 (IFQKIIKGII…LLGGKKLNKI (108 aa)) is the HIT domain. The Histidine triad motif motif lies at 98-102 (HLHLH).

This is an uncharacterized protein from Buchnera aphidicola subsp. Baizongia pistaciae (strain Bp).